A 348-amino-acid chain; its full sequence is Probable tRNA pseudouridine synthase B (348 aa).

The active-site Nucleophile is Asp-93. Positions 260-335 constitute a PUA domain; that stretch reads LKKIYILDSA…IAVDIERVFM (76 aa).

This sequence belongs to the pseudouridine synthase TruB family. Type 2 subfamily.

The enzyme catalyses uridine(55) in tRNA = pseudouridine(55) in tRNA. Could be responsible for synthesis of pseudouridine from uracil-55 in the psi GC loop of transfer RNAs. This chain is Probable tRNA pseudouridine synthase B, found in Nanoarchaeum equitans (strain Kin4-M).